The chain runs to 274 residues: Large ribosomal subunit protein uL2cz/uL2cy (274 aa).

Disordered regions lie at residues 1–23 (MAIH…SKVK) and 224–274 (NPVD…RRSK).

This sequence belongs to the universal ribosomal protein uL2 family. As to quaternary structure, part of the 50S ribosomal subunit.

The protein localises to the plastid. Its subcellular location is the chloroplast. This chain is Large ribosomal subunit protein uL2cz/uL2cy (rpl2-A), found in Lactuca sativa (Garden lettuce).